The chain runs to 1783 residues: Chitin synthase A (1783 aa).

5 N-linked (GlcNAc...) asparagine glycosylation sites follow: N159, N637, N652, N664, and N669. 2 helical membrane-spanning segments follow: residues 745–765 and 781–801; these read IWVA…LSFV and LTLV…IVAF. N-linked (GlcNAc...) asparagine glycans are attached at residues N1014 and N1018. Residues 1051 to 1071 form a helical membrane-spanning segment; the sequence is IMLAMTIILCSVILVKFLAAL. Residue N1416 is glycosylated (N-linked (GlcNAc...) asparagine). A run of 3 helical transmembrane segments spans residues 1441-1461, 1474-1494, and 1502-1522; these read FVVF…IYLG, FPII…LIFI, and IGWM…LPIY. N-linked (GlcNAc...) asparagine glycans are attached at residues N1529 and N1617. A disordered region spans residues 1659-1724; it reads THDINRGQTP…SFDFQRGNMQ (66 aa). A compositionally biased stretch (polar residues) spans 1664–1688; the sequence is RGQTPFQDFPSSRPSVSNLRGQANP. N1695 carries N-linked (GlcNAc...) asparagine glycosylation. The DEK-C domain maps to 1725 to 1781; the sequence is GPDDSMIIEAIQGVLREVDLDTVTKKQVRALVEQRLQTGLVGERRTFMDRQIDNELA.

The protein belongs to the chitin synthase family. Class V subfamily.

It is found in the cell membrane. It catalyses the reaction [(1-&gt;4)-N-acetyl-beta-D-glucosaminyl](n) + UDP-N-acetyl-alpha-D-glucosamine = [(1-&gt;4)-N-acetyl-beta-D-glucosaminyl](n+1) + UDP + H(+). In terms of biological role, polymerizes chitin, a structural polymer of the cell wall and septum, by transferring the sugar moiety of UDP-GlcNAc to the non-reducing end of the growing chitin polymer. Responsible for about 29% of the chitin in conidial walls, is essential for conidial wall strength in media with high water potential and contributes to strength of hyphal tips. In Colletotrichum graminicola (Maize anthracnose fungus), this protein is Chitin synthase A.